The primary structure comprises 241 residues: Biosynthetic peptidoglycan transglycosylase (241 aa).

The helical transmembrane segment at 18 to 38 (GVIGIIALWMAGILIFAFLPV) threads the bilayer.

The protein belongs to the glycosyltransferase 51 family.

Its subcellular location is the cell inner membrane. It carries out the reaction [GlcNAc-(1-&gt;4)-Mur2Ac(oyl-L-Ala-gamma-D-Glu-L-Lys-D-Ala-D-Ala)](n)-di-trans,octa-cis-undecaprenyl diphosphate + beta-D-GlcNAc-(1-&gt;4)-Mur2Ac(oyl-L-Ala-gamma-D-Glu-L-Lys-D-Ala-D-Ala)-di-trans,octa-cis-undecaprenyl diphosphate = [GlcNAc-(1-&gt;4)-Mur2Ac(oyl-L-Ala-gamma-D-Glu-L-Lys-D-Ala-D-Ala)](n+1)-di-trans,octa-cis-undecaprenyl diphosphate + di-trans,octa-cis-undecaprenyl diphosphate + H(+). It functions in the pathway cell wall biogenesis; peptidoglycan biosynthesis. Its function is as follows. Peptidoglycan polymerase that catalyzes glycan chain elongation from lipid-linked precursors. This is Biosynthetic peptidoglycan transglycosylase from Yersinia pseudotuberculosis serotype O:1b (strain IP 31758).